The following is a 254-amino-acid chain: tRNA (guanine-N(7)-)-methyltransferase (254 aa).

The segment at 1–34 is disordered; that stretch reads MNTNTPAHPPEGAPLSEATQAALASAEHAPDSPG. Positions 87, 112, 139, and 162 each coordinate S-adenosyl-L-methionine. D162 is a catalytic residue. Residues K166, D198, and 233–236 contribute to the substrate site; that span reads TKFE.

This sequence belongs to the class I-like SAM-binding methyltransferase superfamily. TrmB family.

It carries out the reaction guanosine(46) in tRNA + S-adenosyl-L-methionine = N(7)-methylguanosine(46) in tRNA + S-adenosyl-L-homocysteine. Its pathway is tRNA modification; N(7)-methylguanine-tRNA biosynthesis. Its function is as follows. Catalyzes the formation of N(7)-methylguanine at position 46 (m7G46) in tRNA. This Bordetella pertussis (strain Tohama I / ATCC BAA-589 / NCTC 13251) protein is tRNA (guanine-N(7)-)-methyltransferase.